A 241-amino-acid chain; its full sequence is Small ribosomal subunit protein eS4 (241 aa).

An S4 RNA-binding domain is found at 37-100 (LPIVVWARDQ…GKHYRILRDK (64 aa)).

This sequence belongs to the eukaryotic ribosomal protein eS4 family.

The protein is Small ribosomal subunit protein eS4 of Methanospirillum hungatei JF-1 (strain ATCC 27890 / DSM 864 / NBRC 100397 / JF-1).